We begin with the raw amino-acid sequence, 109 residues long: UPF0060 membrane protein RHA1_ro06609 (109 aa).

4 helical membrane passes run 7-27 (VALFAVAALFEIGGAWLVWQG), 33-53 (GWIWIGAGVAALGAYGFVATL), 62-82 (ILAAYGGVFVAGSLIWGMVAD), and 88-108 (RWDVSGALICLLGMAVIMYAP).

It belongs to the UPF0060 family.

The protein resides in the cell membrane. The sequence is that of UPF0060 membrane protein RHA1_ro06609 from Rhodococcus jostii (strain RHA1).